Here is a 183-residue protein sequence, read N- to C-terminus: uncharacterized protein (183 aa).

The SIS domain maps to 27 to 170; that stretch reads MIKLIDSARS…VAEIMMQKHL (144 aa).

This sequence belongs to the SIS family. PHI subfamily.

This is an uncharacterized protein from Archaeoglobus fulgidus (strain ATCC 49558 / DSM 4304 / JCM 9628 / NBRC 100126 / VC-16).